Reading from the N-terminus, the 508-residue chain is Ribonuclease Y (508 aa).

Residues 198 to 264 (TVSVINLPND…RLTIEKLITD (67 aa)) enclose the KH domain. The region spanning 324–417 (VLTHSIEVAK…VQAADAVSAS (94 aa)) is the HD domain.

The protein belongs to the RNase Y family.

In terms of biological role, endoribonuclease that initiates mRNA decay. The polypeptide is Ribonuclease Y (Fusobacterium nucleatum subsp. nucleatum (strain ATCC 25586 / DSM 15643 / BCRC 10681 / CIP 101130 / JCM 8532 / KCTC 2640 / LMG 13131 / VPI 4355)).